A 317-amino-acid chain; its full sequence is Probable F-box protein At2g36090 (317 aa).

The region spanning 25–74 (IESHILTRLDGATLASVSCASSHLHHLASNEILWSKICRSTWPSCSGGSR) is the F-box domain.

The chain is Probable F-box protein At2g36090 from Arabidopsis thaliana (Mouse-ear cress).